The primary structure comprises 98 residues: NADH-ubiquinone oxidoreductase chain 4L (98 aa).

3 helical membrane-spanning segments follow: residues 1–21, 29–49, and 61–81; these read MSLIHINVFLAFTTSLMGLLM, SLLCLEGMMLSLFIMATMMVL, and IILLVFAACEAALGLSLLVMI.

This sequence belongs to the complex I subunit 4L family. In terms of assembly, core subunit of respiratory chain NADH dehydrogenase (Complex I) which is composed of 45 different subunits.

It is found in the mitochondrion inner membrane. The catalysed reaction is a ubiquinone + NADH + 5 H(+)(in) = a ubiquinol + NAD(+) + 4 H(+)(out). In terms of biological role, core subunit of the mitochondrial membrane respiratory chain NADH dehydrogenase (Complex I) which catalyzes electron transfer from NADH through the respiratory chain, using ubiquinone as an electron acceptor. Part of the enzyme membrane arm which is embedded in the lipid bilayer and involved in proton translocation. The chain is NADH-ubiquinone oxidoreductase chain 4L (MT-ND4L) from Ceratotherium simum (White rhinoceros).